The primary structure comprises 188 residues: dCTP deaminase (188 aa).

109–114 (KSTYAR) is a dCTP binding site. Catalysis depends on Glu-135, which acts as the Proton donor/acceptor. Positions 154, 168, and 178 each coordinate dCTP.

Belongs to the dCTP deaminase family. As to quaternary structure, homotrimer.

It carries out the reaction dCTP + H2O + H(+) = dUTP + NH4(+). It functions in the pathway pyrimidine metabolism; dUMP biosynthesis; dUMP from dCTP (dUTP route): step 1/2. Catalyzes the deamination of dCTP to dUTP. This is dCTP deaminase from Helicobacter acinonychis (strain Sheeba).